Reading from the N-terminus, the 77-residue chain is Conotoxin Vc6b (77 aa).

The signal sequence occupies residues 1–22; sequence MKLTCMMIVAVLFLTANTFVTA. Residues 23–47 constitute a propeptide that is removed on maturation; the sequence is DDSGNGMENLFPKAGHEMENLEASN. Cystine bridges form between Cys52/Cys66, Cys59/Cys72, and Cys67/Cys76.

In terms of tissue distribution, expressed by the venom duct.

It localises to the secreted. The chain is Conotoxin Vc6b from Conus victoriae (Queen Victoria cone).